A 762-amino-acid polypeptide reads, in one-letter code: Glucan endo-1,3-beta-glucosidase BGN13.1 (762 aa).

The first 16 residues, 1–16 (MLKLTALVALLLGAAS), serve as a signal peptide directing secretion. Positions 17-33 (ATPTPSPPASDEGITKR) are excised as a propeptide.

It belongs to the glycosyl hydrolase 55 family. Does not seem to be glycosylated.

The protein localises to the secreted. The catalysed reaction is Hydrolysis of (1-&gt;3)-beta-D-glucosidic linkages in (1-&gt;3)-beta-D-glucans.. Its activity is regulated as follows. Inhibited by glucose. Involved in mycoparasitism, hydrolyzes yeast and fungal cell walls. Classified as a small-oligosaccharide-producing type based its the end products: glucose, laminaribiose or laminaritetraose. In Trichoderma harzianum (Hypocrea lixii), this protein is Glucan endo-1,3-beta-glucosidase BGN13.1 (bgn13.1).